A 306-amino-acid polypeptide reads, in one-letter code: D-alanine--D-alanine ligase (306 aa).

The region spanning 107–303 is the ATP-grasp domain; that stretch reads KHLFKSAGLS…FEQLVVRILE (197 aa). 134-189 serves as a coordination point for ATP; the sequence is IMQQFKKVMVKPSHEGSSIGMAQASTPQELEDALSNAFKFDSQVLVEQWISGREFT. The Mg(2+) site is built by aspartate 257, glutamate 270, and asparagine 272.

It belongs to the D-alanine--D-alanine ligase family. The cofactor is Mg(2+). It depends on Mn(2+) as a cofactor.

Its subcellular location is the cytoplasm. The catalysed reaction is 2 D-alanine + ATP = D-alanyl-D-alanine + ADP + phosphate + H(+). Its pathway is cell wall biogenesis; peptidoglycan biosynthesis. Functionally, cell wall formation. The polypeptide is D-alanine--D-alanine ligase (Pseudoalteromonas translucida (strain TAC 125)).